We begin with the raw amino-acid sequence, 196 residues long: ATP-dependent Clp protease proteolytic subunit (196 aa).

The Nucleophile role is filled by S98. H123 is a catalytic residue.

Belongs to the peptidase S14 family. In terms of assembly, fourteen ClpP subunits assemble into 2 heptameric rings which stack back to back to give a disk-like structure with a central cavity, resembling the structure of eukaryotic proteasomes.

The protein resides in the cytoplasm. It carries out the reaction Hydrolysis of proteins to small peptides in the presence of ATP and magnesium. alpha-casein is the usual test substrate. In the absence of ATP, only oligopeptides shorter than five residues are hydrolyzed (such as succinyl-Leu-Tyr-|-NHMec, and Leu-Tyr-Leu-|-Tyr-Trp, in which cleavage of the -Tyr-|-Leu- and -Tyr-|-Trp bonds also occurs).. In terms of biological role, cleaves peptides in various proteins in a process that requires ATP hydrolysis. Has a chymotrypsin-like activity. Plays a major role in the degradation of misfolded proteins. The chain is ATP-dependent Clp protease proteolytic subunit from Acidobacterium capsulatum (strain ATCC 51196 / DSM 11244 / BCRC 80197 / JCM 7670 / NBRC 15755 / NCIMB 13165 / 161).